The chain runs to 259 residues: Protein-L-isoaspartate O-methyltransferase (259 aa).

The tract at residues M1–R25 is disordered. S107 is an active-site residue.

It belongs to the methyltransferase superfamily. L-isoaspartyl/D-aspartyl protein methyltransferase family.

Its subcellular location is the cytoplasm. The enzyme catalyses [protein]-L-isoaspartate + S-adenosyl-L-methionine = [protein]-L-isoaspartate alpha-methyl ester + S-adenosyl-L-homocysteine. Functionally, catalyzes the methyl esterification of L-isoaspartyl residues in peptides and proteins that result from spontaneous decomposition of normal L-aspartyl and L-asparaginyl residues. It plays a role in the repair and/or degradation of damaged proteins. This chain is Protein-L-isoaspartate O-methyltransferase, found in Bordetella bronchiseptica (strain ATCC BAA-588 / NCTC 13252 / RB50) (Alcaligenes bronchisepticus).